Reading from the N-terminus, the 666-residue chain is tRNA 5-methylaminomethyl-2-thiouridine biosynthesis bifunctional protein MnmC (666 aa).

Positions 1-245 (MKQYAIQPAT…KREMLCGVME (245 aa)) are tRNA (mnm(5)s(2)U34)-methyltransferase. Residues 270–666 (IGGGIASALL…RKLLKGKAVK (397 aa)) form an FAD-dependent cmnm(5)s(2)U34 oxidoreductase region.

In the N-terminal section; belongs to the methyltransferase superfamily. tRNA (mnm(5)s(2)U34)-methyltransferase family. It in the C-terminal section; belongs to the DAO family. FAD serves as cofactor.

Its subcellular location is the cytoplasm. The enzyme catalyses 5-aminomethyl-2-thiouridine(34) in tRNA + S-adenosyl-L-methionine = 5-methylaminomethyl-2-thiouridine(34) in tRNA + S-adenosyl-L-homocysteine + H(+). In terms of biological role, catalyzes the last two steps in the biosynthesis of 5-methylaminomethyl-2-thiouridine (mnm(5)s(2)U) at the wobble position (U34) in tRNA. Catalyzes the FAD-dependent demodification of cmnm(5)s(2)U34 to nm(5)s(2)U34, followed by the transfer of a methyl group from S-adenosyl-L-methionine to nm(5)s(2)U34, to form mnm(5)s(2)U34. The chain is tRNA 5-methylaminomethyl-2-thiouridine biosynthesis bifunctional protein MnmC from Salmonella paratyphi B (strain ATCC BAA-1250 / SPB7).